Consider the following 234-residue polypeptide: Enterobactin synthase component D (234 aa).

The Mg(2+) site is built by Asp-107, Glu-109, and Glu-152.

The protein belongs to the P-Pant transferase superfamily. EntD family. As to quaternary structure, entB, EntD, EntE, and EntF form a multienzyme complex called enterobactin synthase. Mg(2+) is required as a cofactor.

The protein resides in the membrane. It carries out the reaction apo-[aryl-carrier protein] + CoA = holo-[aryl-carrier protein] + adenosine 3',5'-bisphosphate + H(+). The catalysed reaction is apo-[peptidyl-carrier protein] + CoA = holo-[peptidyl-carrier protein] + adenosine 3',5'-bisphosphate + H(+). Its pathway is siderophore biosynthesis; enterobactin biosynthesis. Its function is as follows. Involved in the biosynthesis of the siderophore enterobactin (enterochelin), which is a macrocyclic trimeric lactone of N-(2,3-dihydroxybenzoyl)-serine. The serine trilactone serves as a scaffolding for the three catechol functionalities that provide hexadentate coordination for the tightly ligated iron(2+) atoms. Plays an essential role in the assembly of the enterobactin by catalyzing the transfer of the 4'-phosphopantetheine (Ppant) moiety from coenzyme A to the apo-domains of both EntB (ArCP domain) and EntF (PCP domain) to yield their holo-forms which make them competent for the activation of 2,3-dihydroxybenzoate (DHB) and L-serine, respectively. This is Enterobactin synthase component D from Salmonella typhi.